Reading from the N-terminus, the 77-residue chain is U10-lycotoxin-Ls1d (77 aa).

Residues 1–20 form the signal peptide; the sequence is MKLIIFTGLFLFAIVSLIEA. The propeptide occupies 21 to 26; that stretch reads EEESGR.

The protein belongs to the neurotoxin 19 (CSTX) family. 09 (U10-Lctx) subfamily. Contains 4 disulfide bonds. In terms of tissue distribution, expressed by the venom gland.

Its subcellular location is the secreted. This Lycosa singoriensis (Wolf spider) protein is U10-lycotoxin-Ls1d.